The chain runs to 701 residues: Polyribonucleotide nucleotidyltransferase (701 aa).

Mg(2+) is bound by residues aspartate 487 and aspartate 493. One can recognise a KH domain in the interval 554–613; the sequence is PTMIAMKIDTDKIRDVIGKGGATIRAICEETKASIDIEDDGSIKIFGETKEAADAAKQRI. Positions 623-691 constitute an S1 motif domain; sequence GKIYVGKVER…NRGRIKLSIK (69 aa).

This sequence belongs to the polyribonucleotide nucleotidyltransferase family. In terms of assembly, component of the RNA degradosome, which is a multiprotein complex involved in RNA processing and mRNA degradation. Requires Mg(2+) as cofactor.

Its subcellular location is the cytoplasm. It carries out the reaction RNA(n+1) + phosphate = RNA(n) + a ribonucleoside 5'-diphosphate. Its function is as follows. Involved in mRNA degradation. Catalyzes the phosphorolysis of single-stranded polyribonucleotides processively in the 3'- to 5'-direction. The chain is Polyribonucleotide nucleotidyltransferase from Pseudomonas entomophila (strain L48).